The sequence spans 452 residues: LIM/homeobox protein lim-7 (452 aa).

LIM zinc-binding domains are found at residues 54–116 and 117–179; these read AVCA…LFTT and RCSR…LDNP. A disordered region spans residues 184–268; sequence SVPDYSKLNN…KKKDKQATRV (85 aa). Composition is skewed to low complexity over residues 192–205 and 217–227; these read NNNN…SSSN and TLTSLDNNTSS. Residues 265–324 constitute a DNA-binding region (homeobox); that stretch reads ATRVRTVLNENQLKILRDCYSINSRPDATLKERLVEMTGLSARVIRVWFQNKRCKDKKRQ. The segment at 347 to 376 is LIM interaction domain (LID); the sequence is GIGPLMVQPATPHIDNTLGGPIDIQHFAQW.

As to quaternary structure, interacts (via LID domain) with ceh-14 (via LIM zinc-binding domains 1 and 2). Expressed in gonadal sheath cells, URA motoneurons, and 10 additional cells near the isthmus and terminal bulb of the pharynx. Expressed in the ALA and BDU cells.

Its subcellular location is the nucleus. Its function is as follows. Probable DNA-binding transcriptional activator. This is LIM/homeobox protein lim-7 from Caenorhabditis elegans.